Reading from the N-terminus, the 147-residue chain is Protein MC014 (147 aa).

It localises to the host nucleus. The sequence is that of Protein MC014 (MC014) from Homo sapiens (Human).